The chain runs to 122 residues: Large ribosomal subunit protein uL18 (122 aa).

It belongs to the universal ribosomal protein uL18 family. As to quaternary structure, part of the 50S ribosomal subunit; part of the 5S rRNA/L5/L18/L25 subcomplex. Contacts the 5S and 23S rRNAs.

In terms of biological role, this is one of the proteins that bind and probably mediate the attachment of the 5S RNA into the large ribosomal subunit, where it forms part of the central protuberance. This is Large ribosomal subunit protein uL18 from Buchnera aphidicola subsp. Acyrthosiphon pisum (strain 5A).